Here is a 449-residue protein sequence, read N- to C-terminus: Probable ubiquitin carboxyl-terminal hydrolase 8 (449 aa).

The UBP-type zinc-finger motif lies at 6–113; the sequence is EGCQHLKLKP…FKIKNIKAWQ (108 aa). Zn(2+)-binding residues include cysteine 8, histidine 10, cysteine 38, cysteine 41, cysteine 51, cysteine 54, cysteine 59, histidine 64, histidine 68, histidine 74, cysteine 87, and cysteine 90. The USP domain maps to 145 to 435; the sequence is RGIQNLGATC…QAYLLFYHER (291 aa). The active-site Nucleophile is the cysteine 154. Zn(2+) is bound by residues histidine 178, cysteine 183, cysteine 188, cysteine 191, histidine 246, cysteine 257, cysteine 259, histidine 262, cysteine 275, cysteine 278, cysteine 317, and cysteine 320. Residue histidine 395 is the Proton acceptor of the active site.

This sequence belongs to the peptidase C19 family. UBP8 subfamily. As to quaternary structure, component of the 1.8 MDa SAGA (Spt-Ada-Gcn5 acetyltransferase) complex, which is composed of 19 subunits tra1, spt7, taf5, ngg1/ada3, sgf73, spt20, spt8, taf12, taf6, hfi1/ada1, ubp8, gcn5, ada2, spt3, sgf29, taf10, taf9, sgf11 and sus1. The SAGA complex is composed of 4 modules, namely the HAT (histone acetyltransferase) module (gcn5, ada2, ngg1/ada3 and sgf29), the DUB (deubiquitinating) module (ubp8, sgf11, sgf73 and sus1), the core or TAF (TBP-associated factor) module (taf5, taf6, taf9, taf10 and taf12), and the Tra1 or SPT (Suppressor of Ty) module (tra1, hfi1/ada1, spt3, spt7, spt8 and spt20). The Tra1/SPT module binds activators, the core module recruits TBP (TATA-binding protein), the HAT module contains the histone H3 acetyltransferase gcn5, and the DUB module comprises the histone H2B deubiquitinase ubp8.

It is found in the nucleus. The protein localises to the nucleoplasm. The enzyme catalyses Thiol-dependent hydrolysis of ester, thioester, amide, peptide and isopeptide bonds formed by the C-terminal Gly of ubiquitin (a 76-residue protein attached to proteins as an intracellular targeting signal).. Its function is as follows. Histone deubiquitinating enzyme component of the transcription coactivator SAGA complex. SAGA acts as a general cofactor required for essentially all RNA polymerase II transcription. At the promoters, SAGA is required for transcription pre-initiation complex (PIC) recruitment. It influences RNA polymerase II transcriptional activity through different activities such as TBP interaction (via core/TAF module) and promoter selectivity, interaction with transcription activators (via Tra1/SPT module), and chromatin modification through histone acetylation (via HAT module) and deubiquitination (via DUB module). SAGA preferentially acetylates histones H3 (to form H3K9ac, H3K14ac, H3K18ac and H3K23ac) and H2B and deubiquitinates histone H2B. SAGA interacts with DNA via upstream activating sequences (UASs). Within the DUB module, the correctly positioned zinc finger domains of sgf11 and sgf73 are both required to fully activate the ubiquitin hydrolase ubp8. The DUB module is also linked to the splicing efficiency of many transcripts. This is Probable ubiquitin carboxyl-terminal hydrolase 8 (ubp8) from Schizosaccharomyces pombe (strain 972 / ATCC 24843) (Fission yeast).